We begin with the raw amino-acid sequence, 297 residues long: MTEAFYTDKSRVRASFDRAAATYDRAAVLQREVCDRMATRLDLIRHAPARVLDAGSGTGYGAGLLRARYPEAQVTELDLAPSMLRASRDKQLPQGRLRRLFARAPALVCADLEQLPLASGSLDMVWSSLALQWLNTPDAVLAEFHRVLRVDGLLMFATLGPDTLKELRQAFAGIDGATHVNQFIDMHDMGDALVRAGFATPVMDVERIVLTYDEVKAVMRDLKAIGAHNATAGRGRGLMGRQAWQRIEAAYDRLRQDGRLPATYEVVYGHAWRPAARPRRKLDDGRDIIEFHPHAPA.

This sequence belongs to the methyltransferase superfamily.

The enzyme catalyses malonyl-[ACP] + S-adenosyl-L-methionine = malonyl-[ACP] methyl ester + S-adenosyl-L-homocysteine. It functions in the pathway cofactor biosynthesis; biotin biosynthesis. In terms of biological role, converts the free carboxyl group of a malonyl-thioester to its methyl ester by transfer of a methyl group from S-adenosyl-L-methionine (SAM). It allows to synthesize pimeloyl-ACP via the fatty acid synthetic pathway. This is Malonyl-[acyl-carrier protein] O-methyltransferase from Laribacter hongkongensis (strain HLHK9).